We begin with the raw amino-acid sequence, 480 residues long: MDSPEVYEVVDASPEKPMEIAIVGGGIVGVILAIGLTRQNIKVRVFEQAASFREIGAGMAFNACARNCMDLIDPVITQALLRCGAVNMSDVDAEDDYLRWIDGYNQHRPEDPSYQRPLSEIGGAGFRGCRRDQFLEELAKEVPQGAVEFRKRLASLEDNTDNGPVVLNFTDGTRAEVDAVIGCDGIKSVVRKQMFGTNHPASNAQYTHKVAYRGLVPMNRAVEVLGPWKAGNFHHHVGPGAHLTHYPVANNTVLNVVAFLSDPNPWPDNQRMEMEGSREDVLTGLKGWHPTVLNLVNLLPEKLSKWALFDLCEFPAPSYSAGRVCIAGDAAHASSPHHGASACLGVEDCLCLNVLLAQVRETVAANQDPAKNRLALSRAIETAFKTFDTVRHKRTQWLVNSSRRVCDLYHQPEWADPTRWAKAETCFEEIRDRSYKIWYFDVDGMVKQTRDEYELRQHGEKLGNGTNGVFSDERHGGYTL.

A helical transmembrane segment spans residues 17 to 37 (PMEIAIVGGGIVGVILAIGLT). FAD contacts are provided by Glu47 and Ala60. The N-linked (GlcNAc...) asparagine glycan is linked to Asn87. Position 131 (Arg131) interacts with FAD. Asn168 carries an N-linked (GlcNAc...) asparagine glycan. Residues Arg213 and Tyr246 contribute to the active site. Residue Asn250 is glycosylated (N-linked (GlcNAc...) asparagine). FAD is bound by residues Asp329 and Ala342. Residues Asn400 and Asn464 are each glycosylated (N-linked (GlcNAc...) asparagine).

It belongs to the paxM FAD-dependent monooxygenase family. It depends on FAD as a cofactor.

It localises to the membrane. The protein operates within secondary metabolite biosynthesis; terpenoid biosynthesis. Its function is as follows. Salicylate hydroxylase; part of the gene cluster that mediates the biosynthesis of xenovulene A, an unusual meroterpenoid that has potent inhibitory effects on the human gamma-aminobutyrate A (GABAA) benzodiazepine receptor. The first step of xenovulene A biosynthesis is the biosynthesis of 3-methylorcinaldehyde performed by the non-reducing polyketide synthase aspks1. The salicylate hydroxylase asL1 then catalyzes the oxidative dearomatization of 3-methylorcinaldehyde to yield a dearomatized hydroxycyclohexadione. The 2-oxoglutarate-dependent dioxygenase asL3 further catalyzes the oxidative ring expansion to provide the first tropolone metabolite. The cytochrome P450 monooxygenase asR2 allows the synthesis of tropolone hemiacetal. In parallel, a previously unrecognised class of terpene cyclase, asR6, produces alpha-humulene from farnesylpyrophosphate (FPP). The putative Diels-Alderase asR5 probably catalyzes the formation of the tropolone-humulene skeleton by linking humulene and the polyketide moiety. Oxidative-ring contractions catalyzed by asL4 and asL6 then processively remove carbon atoms from the polyketide to yield xenovulene A. This chain is Salicylate hydroxylase asL1, found in Sarocladium schorii (Acremonium strictum (strain IMI 501407)).